The following is a 285-amino-acid chain: MFKDFFNRSKKKKYLTVQDSKQNDVPAGIMTKCPKCKKIMYTKELNENLNVCFNCDHHIALTAYKRIEAISDEGSFIEFDRGMTSANPLDFPGYEEKIEKDQQKTGLNEALVSGTAKLDGIQYGVAVMDARFRMGSMGSVVGEKICRIIDYCTEHRLPFILFSASGGARMQEGIISLMQMGKTSVSLKRHSDAGLLYISYITNPTTGGVSASFASVGDINLSEPKALIGFAGRRVIEQTINEKLPDDFQTAEFLLEHGQLDKVIHRKDMRETLSNILKIHQEVSN.

One can recognise a CoA carboxyltransferase N-terminal domain in the interval 29 to 285 (IMTKCPKCKK…ILKIHQEVSN (257 aa)). Zn(2+) contacts are provided by Cys-33, Cys-36, Cys-52, and Cys-55. The C4-type zinc finger occupies 33-55 (CPKCKKIMYTKELNENLNVCFNC).

The protein belongs to the AccD/PCCB family. As to quaternary structure, acetyl-CoA carboxylase is a heterohexamer composed of biotin carboxyl carrier protein (AccB), biotin carboxylase (AccC) and two subunits each of ACCase subunit alpha (AccA) and ACCase subunit beta (AccD). Requires Zn(2+) as cofactor.

The protein localises to the cytoplasm. It catalyses the reaction N(6)-carboxybiotinyl-L-lysyl-[protein] + acetyl-CoA = N(6)-biotinyl-L-lysyl-[protein] + malonyl-CoA. Its pathway is lipid metabolism; malonyl-CoA biosynthesis; malonyl-CoA from acetyl-CoA: step 1/1. Component of the acetyl coenzyme A carboxylase (ACC) complex. Biotin carboxylase (BC) catalyzes the carboxylation of biotin on its carrier protein (BCCP) and then the CO(2) group is transferred by the transcarboxylase to acetyl-CoA to form malonyl-CoA. The polypeptide is Acetyl-coenzyme A carboxylase carboxyl transferase subunit beta (Staphylococcus epidermidis (strain ATCC 12228 / FDA PCI 1200)).